The primary structure comprises 138 residues: MLQPKRRKYRKEQKGRNTGIATRGNAVSFGEFGLKAIGRGRLTARQIEAARRAMTRHIKRGGRIWIRIFPDKPISHKPAEVRMGNGKGNPEYYVAEIQPGKMLYEMDGVTEELAREAFRLAAAKLPLKTTFIVRQLGA.

A compositionally biased stretch (basic residues) spans 1 to 13 (MLQPKRRKYRKEQ). Residues 1 to 20 (MLQPKRRKYRKEQKGRNTGI) are disordered.

Belongs to the universal ribosomal protein uL16 family. Part of the 50S ribosomal subunit.

Functionally, binds 23S rRNA and is also seen to make contacts with the A and possibly P site tRNAs. In Paraburkholderia phytofirmans (strain DSM 17436 / LMG 22146 / PsJN) (Burkholderia phytofirmans), this protein is Large ribosomal subunit protein uL16.